The sequence spans 409 residues: Phosphatidylglycerol--prolipoprotein diacylglyceryl transferase (409 aa).

Transmembrane regions (helical) follow at residues 18-38, 48-68, 93-113, and 119-139; these read PVPLRAYALMIIIGVFVAVFV, MDPMVASEVAYWAVPFGIVGA, IWNGGLGIWGAIAGGAFGAWL, and GISLALFGDAAAPGIILAQAI. Arg-141 is an a 1,2-diacyl-sn-glycero-3-phospho-(1'-sn-glycerol) binding site. 2 consecutive transmembrane segments (helical) span residues 177–197 and 234–254; these read QPTFLYECLWNLVVAGILLVV and ILGLRVNIWTSIVVCLGALLA. The segment at 273–409 is disordered; it reads ALGIARSRPA…AVPPEEPQLP (137 aa). Composition is skewed to low complexity over residues 297–309, 320–335, and 348–375; these read AAAPDSAGPDSAA, PDLGGPDPADPGSAGS, and TATTATTATTATTATTATTATTATTATT.

Belongs to the Lgt family.

It localises to the cell membrane. It catalyses the reaction L-cysteinyl-[prolipoprotein] + a 1,2-diacyl-sn-glycero-3-phospho-(1'-sn-glycerol) = an S-1,2-diacyl-sn-glyceryl-L-cysteinyl-[prolipoprotein] + sn-glycerol 1-phosphate + H(+). Its pathway is protein modification; lipoprotein biosynthesis (diacylglyceryl transfer). Catalyzes the transfer of the diacylglyceryl group from phosphatidylglycerol to the sulfhydryl group of the N-terminal cysteine of a prolipoprotein, the first step in the formation of mature lipoproteins. The polypeptide is Phosphatidylglycerol--prolipoprotein diacylglyceryl transferase (Frankia casuarinae (strain DSM 45818 / CECT 9043 / HFP020203 / CcI3)).